Reading from the N-terminus, the 383-residue chain is Ribosomal RNA large subunit methyltransferase G (383 aa).

It belongs to the methyltransferase superfamily. RlmG family.

It is found in the cytoplasm. It catalyses the reaction guanosine(1835) in 23S rRNA + S-adenosyl-L-methionine = N(2)-methylguanosine(1835) in 23S rRNA + S-adenosyl-L-homocysteine + H(+). Functionally, specifically methylates the guanine in position 1835 (m2G1835) of 23S rRNA. The protein is Ribosomal RNA large subunit methyltransferase G of Shewanella amazonensis (strain ATCC BAA-1098 / SB2B).